A 421-amino-acid chain; its full sequence is Putative leucine-rich repeat protein R380 (421 aa).

LRR repeat units lie at residues 48-69 (YLEK…QYLP), 70-85 (KIKE…THIP), 89-110 (NLIK…NQSK), 111-129 (LLYL…IFLP), 130-150 (ECRE…NYFP), 151-172 (NLRI…SSLI), and 173-191 (ELNI…PQLV).

In Acanthamoeba polyphaga (Amoeba), this protein is Putative leucine-rich repeat protein R380.